A 230-amino-acid chain; its full sequence is Urease accessory protein UreF (230 aa).

It belongs to the UreF family. In terms of assembly, ureD, UreF and UreG form a complex that acts as a GTP-hydrolysis-dependent molecular chaperone, activating the urease apoprotein by helping to assemble the nickel containing metallocenter of UreC. The UreE protein probably delivers the nickel.

Its subcellular location is the cytoplasm. Its function is as follows. Required for maturation of urease via the functional incorporation of the urease nickel metallocenter. This is Urease accessory protein UreF from Cupriavidus pinatubonensis (strain JMP 134 / LMG 1197) (Cupriavidus necator (strain JMP 134)).